Here is a 201-residue protein sequence, read N- to C-terminus: Ribonuclease HII (201 aa).

One can recognise an RNase H type-2 domain in the interval Ala15–Pro201. A divalent metal cation-binding residues include Asp21, Glu22, and Asp113.

This sequence belongs to the RNase HII family. Mn(2+) is required as a cofactor. It depends on Mg(2+) as a cofactor.

The protein resides in the cytoplasm. It catalyses the reaction Endonucleolytic cleavage to 5'-phosphomonoester.. Its function is as follows. Endonuclease that specifically degrades the RNA of RNA-DNA hybrids. This Bordetella pertussis (strain Tohama I / ATCC BAA-589 / NCTC 13251) protein is Ribonuclease HII.